The primary structure comprises 904 residues: MDRYLLLVIWGEGKFPSAASREAEHGPEVSSGEGTENQPDFTAANVYHLLKRSISASINPEDSTFPACSVGGIPGSKKWFFAVQAIYGFYQFCSSDWQEIHFDTEKDKIEDVLQTNIEECLGAVECFEEEDSNSRESLSLADLYEEAAENLHQLSDKLPAPGRAMVDIILLLSDKDPPKLKDYLPTVGALKHLREWYSAKITIAGNHCEINCQKIAEYLSANVVSLEDLRNVIDSKELWRGKIQIWERKFGFEISFPEFCLKGVTLKNFSTSNLNTDFLAKKIIPSKDKNILPKVFHYYGPALEFVQMIKLSDLPSCYMSDIEFELGLTNSTKQNSVLLLEQISSLCSKVGALFVLPCTISNILIPPPNQLSSRKWKEYIAKKPKTISVPDVEVKGECSSYYLLLQGNGNRRCKATLIHSANQINGSFALNLIHGKMKTKTEEAKLSFPFDLLSLPHFSGEQIVQREKQLANVQVLALEECLKRRKLAKQPETVSVAELKSLLVLTRKHFLDYFDAVIPKMILRKMDKIKTFNILNDFSPVEPNSSSLMETNPLEWPERHVLQNLETFEKTKQKMRTGSLPHSSEQLLGHKEGPRDSITLLDAKELLKYFTSDGLPIGDLQPLPIQKGEKTFVLTPELSPGKLQVLPFEKASVCHYHGIEYCLDDRKALERDGGFSELQSRLIRYETQTTCTRESFPVPTVLSPLPSPVVSSDPGSVPDGEVLQNELRTEVSRLKRRSKDLNCLYPRKRLVKSESSESLLSQTTGNSNHYHHHVTSRKPQTERSLPVTCPLVPIPSCETPKLATKTSSGQKSMHESKTSRQIKESRSQKHTRILKEVVTETLKKHSITETHECFTACSQRLFEISKFYLKDLKTSRGLFEEMKKTANNNAVQVIDWVLEKTSKK.

The tract at residues 19 to 38 (ASREAEHGPEVSSGEGTENQ) is disordered. The interval 521–904 (MILRKMDKIK…DWVLEKTSKK (384 aa)) is interaction with MDM2. Phosphoserine occurs at positions 597, 639, 703, and 707. Disordered regions lie at residues 754–784 (ESSE…TERS) and 800–830 (PKLA…SQKH). A compositionally biased stretch (basic and acidic residues) spans 812–830 (SMHESKTSRQIKESRSQKH).

The protein belongs to the MTBP family. In terms of assembly, interacts with MDM2.

Its function is as follows. Inhibits cell migration in vitro and suppresses the invasive behavior of tumor cells. May play a role in MDM2-dependent p53/TP53 homeostasis in unstressed cells. Inhibits autoubiquitination of MDM2, thereby enhancing MDM2 stability. This promotes MDM2-mediated ubiquitination of p53/TP53 and its subsequent degradation. This chain is Mdm2-binding protein (MTBP), found in Homo sapiens (Human).